Consider the following 320-residue polypeptide: Cytochrome f (320 aa).

Positions 1-35 (MQTRNAFSWIKKEITRSISVLLMIYIITRAPISNA) are cleaved as a signal peptide. Heme is bound by residues Tyr36, Cys56, Cys59, and His60. The helical transmembrane segment at 286-305 (VQGLLLFLASIILAQILLVL) threads the bilayer.

Belongs to the cytochrome f family. The 4 large subunits of the cytochrome b6-f complex are cytochrome b6, subunit IV (17 kDa polypeptide, petD), cytochrome f and the Rieske protein, while the 4 small subunits are PetG, PetL, PetM and PetN. The complex functions as a dimer. The cofactor is heme.

It localises to the plastid. The protein localises to the chloroplast thylakoid membrane. Functionally, component of the cytochrome b6-f complex, which mediates electron transfer between photosystem II (PSII) and photosystem I (PSI), cyclic electron flow around PSI, and state transitions. The polypeptide is Cytochrome f (petA) (Pisum sativum (Garden pea)).